The following is a 293-amino-acid chain: DOMON domain-containing protein FRRS1L (293 aa).

Positions 1–28 are cleaved as a signal peptide; that stretch reads MARPPRQHPGVWASLLLLLLTGPAACAA. Residues 29–61 are disordered; that stretch reads SPADDGAGPGGRGPRGRARGDTGADEAVPRHDS. The segment covering 46-61 has biased composition (basic and acidic residues); sequence ARGDTGADEAVPRHDS. The DOMON domain maps to 119–234; that stretch reads CDYFLSYRMI…WYYLFAWGPA (116 aa). The chain crosses the membrane as a helical span at residues 271 to 291; sequence TFSSPFCLLLIVALTFYLLMG.

In terms of assembly, component of the outer core of AMPAR complex. AMPAR complex consists of an inner core made of 4 pore-forming GluA/GRIA proteins (GRIA1, GRIA2, GRIA3 and GRIA4) and 4 major auxiliary subunits arranged in a twofold symmetry. One of the two pairs of distinct binding sites is occupied either by CNIH2, CNIH3 or CACNG2, CACNG3. The other harbors CACNG2, CACNG3, CACNG4, CACNG8 or GSG1L. This inner core of AMPAR complex is complemented by outer core constituents binding directly to the GluA/GRIA proteins at sites distinct from the interaction sites of the inner core constituents. Outer core constituents include at least PRRT1, PRRT2, CKAMP44/SHISA9, FRRS1L and NRN1. The proteins of the inner and outer core serve as a platform for other, more peripherally associated AMPAR constituents. Alone or in combination, these auxiliary subunits control the gating and pharmacology of the AMPAR complex and profoundly impact their biogenesis and protein processing. Expressed in adult and fetal brain. Very weak expression in medulla, spinal cord and in adult ovary.

Its subcellular location is the cell membrane. The protein localises to the synapse. Functionally, important modulator of glutamate signaling pathway. The protein is DOMON domain-containing protein FRRS1L (FRRS1L) of Homo sapiens (Human).